The primary structure comprises 211 residues: Minor capsid protein VP2 (211 aa).

This sequence belongs to the norovirus VP2 family. As to quaternary structure, homooligomer. The portal-like structure consists in 12 copies of VP2. Interacts with capsid protein VP1.

It localises to the virion. The protein resides in the host cytoplasm. Minor structural protein that forms a portal-like structure at a unique three-fold axis of symmetry, following binding to the host receptor. The channel formed by VP2 may allow the delivery of the viral genome through the host endosomal membrane. The protein is Minor capsid protein VP2 of Homo sapiens (Human).